We begin with the raw amino-acid sequence, 507 residues long: Cyclic GMP-AMP synthase (507 aa).

The tract at residues 1 to 146 is DNA-binding; that stretch reads MEDPRRRTTA…PRAPRGSRKE (146 aa). The segment at 1 to 151 is disordered; it reads MEDPRRRTTA…GSRKEPDKLK (151 aa). The span at 7-18 shows a compositional bias: basic residues; sequence RTTAPRAKKPSA. Positions 44–57 are enriched in basic and acidic residues; that stretch reads RRAERDGDTTEKPR. The segment at 48-59 is required for association with the cell membrane; sequence RDGDTTEKPRAP. Thr52 is subject to Phosphothreonine. A required for activation upon DNA viral infection region spans residues 119–132; the sequence is RKVVRGPSHRRGAR. The segment covering 121-131 has biased composition (basic residues); that stretch reads VVRGPSHRRGA. A Nuclear export signal motif is present at residues 154–159; the sequence is LDKLRL. Lys156 is modified (N6-lactoyllysine). A DNA-binding region spans residues 158–201; it reads RLKRKDISEAAETVNKVVERLLRRMQKRESEFKGVEQLNTGSYY. Residue Glu176 is modified to PolyADP-ribosyl glutamic acid. Thr197 lines the GTP pocket. Residue Ser199 coordinates ATP. Residue Ser199 is modified to Phosphoserine. Tyr201 carries the post-translational modification Phosphotyrosine. Mg(2+) is bound by residues Glu211 and Asp213. 2',3'-cGAMP is bound at residue Asp213. Residue Lys217 forms a Glycyl lysine isopeptide (Lys-Gly) (interchain with G-Cter in SUMO) linkage. A Glycyl lysine isopeptide (Lys-Gly) (interchain with G-Cter in ubiquitin) cross-link involves residue Lys271. The residue at position 272 (Glu272) is a 5-glutamyl polyglutamate. The Nuclear localization signal motif lies at 281 to 291; the sequence is DVSVEKEKPGS. Gly290 contacts 2',3'-cGAMP. Residue Ser291 is modified to Phosphoserine; by CDK1 and PKB. 5-glutamyl glutamate is present on Glu302. Asp307 contributes to the GTP binding site. Asp307 is a Mg(2+) binding site. Asp307 is a 2',3'-cGAMP binding site. The tract at residues 329-370 is interaction with collided ribosomes; sequence QGWLGTKVRTNLRREPFYLVPKNAKDGNSFQGETWRLSFSHT. Lys335 participates in a covalent cross-link: Glycyl lysine isopeptide (Lys-Gly) (interchain with G-Cter in SUMO); alternate. Residue Lys335 forms a Glycyl lysine isopeptide (Lys-Gly) (interchain with G-Cter in ubiquitin); alternate linkage. Residues Lys350 and 364–366 contribute to the 2',3'-cGAMP site; that span reads RLS. Position 364-371 (364-371) interacts with GTP; sequence RLSFSHTE. ATP is bound at residue Glu371. A Glycyl lysine isopeptide (Lys-Gly) (interchain with G-Cter in SUMO); alternate cross-link involves residue Lys372. Lys372 participates in a covalent cross-link: Glycyl lysine isopeptide (Lys-Gly) (interchain with G-Cter in ubiquitin); alternate. Lys372 bears the N6-acetyllysine mark. The interval 372–395 is DNA-binding; sequence KYILNNHGIEKTCCESSGAKCCRK. Residue His378 participates in Zn(2+) binding. Lys382 participates in a covalent cross-link: Glycyl lysine isopeptide (Lys-Gly) (interchain with G-Cter in SUMO). N6-acetyllysine is present on Lys382. Zn(2+)-binding residues include Cys384, Cys385, and Cys392. Residues Cys392 and Cys393 are each lipidated (S-palmitoyl cysteine). Glycyl lysine isopeptide (Lys-Gly) (interchain with G-Cter in ubiquitin) cross-links involve residues Lys399, Lys402, Lys409, and Lys410. Residue Lys402 participates in ATP binding. Lys402 is modified (N6-acetyllysine). The residue at position 420 (Ser420) is a Phosphoserine. An ATP-binding site is contributed by 420–424; the sequence is SYHVK. Residue Cys459 is the site of S-palmitoyl cysteine attachment. Lys464 participates in a covalent cross-link: Glycyl lysine isopeptide (Lys-Gly) (interchain with G-Cter in SUMO); alternate. Lys464 is covalently cross-linked (Glycyl lysine isopeptide (Lys-Gly) (interchain with G-Cter in ubiquitin); alternate). Lys491 bears the N6-methyllysine mark.

It belongs to the mab-21 family. In terms of assembly, monomer in the absence of DNA. Homodimer in presence of dsDNA: forms a 2:2 dimer with two enzymes binding to two DNA molecules. Interacts with nucleosomes; interaction is mainly mediated via histones H2A and H2B and inactivates the nucleotidyltransferase activity by blocking DNA-binding and subsequent activation. Interacts with PQBP1 (via WW domain). Interacts with TRIM14; this interaction recruits USP14, leading to deubiquitinate and stabilize CGAS and promote type I interferon production. Interacts with ZCCHC3; promoting sensing of dsDNA by CGAS. Interacts (when not monomethylated) with (poly-ADP-ribosylated) PARP1; interaction takes place in the nucleus and prevents the formation of the PARP1-TIMELESS complex. Interacts (when monomethylated) with SGF29; interaction with SGF29 prevents interaction with PARP1. Interacts with PCBP2; preventing the formation of liquid-like droplets in which CGAS is activated. Interacts with Irgm1; promoting CGAS degradation. Interacts with DDX41. Mg(2+) is required as a cofactor. Mn(2+) serves as cofactor. It depends on Zn(2+) as a cofactor. The N-terminal disordered part (1-146) is phosphorylated by AURKB during the G2-M transition, blocking CGAS liquid phase separation and preventing activation. Phosphorylation at Tyr-201 by BLK promotes cytosolic retention. Localizes into the nucleus following dephosphorylation at Tyr-201. Phosphorylation at Ser-420 activates the nucleotidyltransferase activity. Dephosphorylation at Ser-420 by PPP6C impairs its ability to bind GTP, thereby inactivating it. Phosphorylation at Thr-52 and Ser-199 by PRKDC inhibits its cyclic GMP-AMP synthase activity by impairing homodimerization and activation. Phosphorylation at Ser-291 by AKT (AKT1, AKT2 or AKT3) suppresses the nucleotidyltransferase activity. Phosphorylation at Ser-291 by CDK1 during mitosis leads to its inhibition, thereby preventing CGAS activation by self-DNA during mitosis. Dephosphorylated at Ser-291 by protein phosphatase PP1 upon mitotic exit. Post-translationally, ubiquitinated at Lys-402 via 'Lys-48'-linked polyubiquitin chains, leading to its SQSTM1-mediated autophagic degradation. Interaction with TRIM14 promotes recruitment of USP14, leading to deubiquitinate Lys-402 and stabilize CGAS. Ubiquitinated at Lys-372 by RNF185 via 'Lys-27'-linked polyubiquitination, promoting CGAS cyclic GMP-AMP synthase activity. Monoubiquitination at Lys-335 by TRIM56 promotes oligomerization and subsequent activation. Monoubiquitination by TRIM41 promotes CGAS activation. Ubiquitination at Lys-271 and Lys-464 via 'Lys-48'-linked polyubiquitination promotes its degradation. Deubiquitination at Lys-271 by USP29 promotes its stabilization. Deubiquitinated by USP27X, promoting its stabilization. Ubiquitinated at Lys-399 via 'Lys-63'-linked polyubiquitin chains by MARCHF8, leading to the inhibition of its DNA binding ability. In cycling cells, nucleosome-bound CGAS is ubiquitinated at Lys-409 and Lys-410 via 'Lys-48'-linked polyubiquitin chains by the ECS(SPSB3) complex, leading to its degradation: ubiquitination and degradation of nuclear CGAS during G1 and G2 phases is required to promote low intranuclear CGAS abundance before the next mitotic cycle. In terms of processing, sumoylated at Lys-217 and Lys-464 by TRIM38 in uninfected cells and during the early phase of viral infection, promoting its stability by preventing ubiquitination at Lys-271 and Lys-464, and subsequent degradation. Desumoylated by SENP2 during the late phase of viral infection. Sumoylation at Lys-335, Lys-372 and Lys-382 prevents DNA-binding, oligomerization and nucleotidyltransferase activity. Desumoylation at Lys-335, Lys-372 and Lys-382 by SENP7 relieves inhibition and activates CGAS. Polyglutamylated by TTLL6 at Glu-272, leading to impair DNA-binding activity. Monoglutamylated at Glu-302 by TTLL4, leading to impair the nucleotidyltransferase activity. Deglutamylated by AGBL5/CCP5 and AGBL6/CCP6. Post-translationally, acetylation at Lys-372, Lys-382 and Lys-402 inhibits the cyclic GMP-AMP synthase activity. Deacetylated upon cytosolic DNA challenge such as viral infections. Acetylation by KAT5 increases the cyclic GMP-AMP synthase activity by promoting DNA-binding and subsequent activation. In terms of processing, proteolytically cleaved by apoptotic caspases during apoptosis, leading to its inactivation. The damage of the nucleus and the mitochondria during apoptosis leads to leakage of nuclear and mitochondrial DNA, which activate CGAS: cleavage and inactivation during apoptosis in required to prevent cytokine overproduction. Cleaved by CASP7 and CASP3 during virus-induced apoptosis, thereby inactivating it and preventing cytokine overproduction. Cleaved by CASP1 upon DNA virus infection; the cleavage impairs cGAMP production. Also cleaved by the pyroptotic CASP4 during non-canonical inflammasome activation; does not cut at the same sites than CASP1. Degraded via selective autophagy following interaction with Irgm1. Irgm1 promotes CGAS recruitment to autophagosome membranes, promoting its SQSTM1/p62-dependent autophagic degradation. Post-translationally, poly-ADP-ribosylation at Glu-176 by PARP1 impairs DNA-binding, thereby preventing the cyclic GMP-AMP synthase activity. In terms of processing, palmitoylation at Cys-459 by ZDHHC18 impairs DNA-binding, thereby preventing the cyclic GMP-AMP synthase activity. Palmitoylation at Cys-392 and Cys-393 by ZDHHC9 promotes homodimerization and cyclic GMP-AMP synthase activity. Depalmitoylation at Cys-392 and Cys-393 by LYPLAL1 impairs homodimerization and cyclic GMP-AMP synthase activity. Monomethylated at Lys-491 by SETD7. Monomethylation promotes interaction with SGF29, preventing interaction between PARP1 nad SGF29. Demethylation by RIOX1 promotes interaction with PARP1, followed by PARP1 inactivation. Post-translationally, lactylation by AARS2 prevents ability to undergo liquid-liquid phase separation (LLPS), thereby inhibiting CGAS activation.

It localises to the nucleus. The protein localises to the chromosome. It is found in the cell membrane. The protein resides in the cytoplasm. Its subcellular location is the cytosol. It carries out the reaction GTP + ATP = 2',3'-cGAMP + 2 diphosphate. The enzyme catalyses GTP + ATP = pppGp(2'-5')A + diphosphate. It catalyses the reaction pppGp(2'-5')A = 2',3'-cGAMP + diphosphate. The enzyme activity is strongly increased by double-stranded DNA (dsDNA), but not by single-stranded DNA or RNA. DNA-binding induces the formation of liquid-like droplets in which CGAS is activated. Liquid-like droplets also create a selective environment that restricts entry of negative regulators, such as TREX1 or BANF1/BAF, allowing sensing of DNA. A number of mechanisms exist to restrict its activity toward self-DNA. The nucleotidyltransferase activity is inhibited in the nucleus via its association with nucleosomes: interacts with the acidic patch of histones H2A and H2B, thereby blocking DNA-binding and subsequent activation. CGAS is also inactive when associated with mitotic chromatin. Chromatin-bound CGAS cannot be activated by exogenous DNA in mitotic cells: phosphorylation of the N-terminal disordered part by AURKB during the G2-M transition blocks CGAS liquid phase separation and activation. Activity toward self-DNA is inhibited by BANF1/BAF upon acute loss of nuclear membrane integrity: BANF1/BAF acts by outcompeting CGAS for DNA-binding, thereby preventing CGAS activation. DNA-induced activation at micronuclei is also limited by TREX1, which degrades micronuclear DNA upon nuclear envelope rupture, thereby preventing CGAS activation. CGAS can be released from nucleosomes and activated by MRE11 component of the MRN complex, which displaces CGAS from acidic-patch-mediated sequestration. Acetylation at Lys-372, Lys-382 and Lys-402 inhibits the cyclic GMP-AMP synthase activity. Acetylation by KAT5 increases the cyclic GMP-AMP synthase activity by promoting DNA-binding and subsequent activation. Phosphorylation at Ser-291 suppresses the nucleotidyltransferase activity. Phosphorylation at Ser-420 promotes the cyclic GMP-AMP synthase activity. Phosphorylation at Thr-52 and Ser-199 inhibits its cyclic GMP-AMP synthase activity. Ubiquitination at Lys-372 via 'Lys-27'-linked polyubiquitination enhances the cyclic GMP-AMP synthase activity. Monoubiquitination at Lys-335 promotes oligomerization and subsequent activation. Sumoylation at Lys-335, Lys-372 and Lys-382 prevents DNA-binding, oligomerization and nucleotidyltransferase activity. The enzyme activity is impaired by the cleavage by CASP1. In addition to DNA, also activated by collided ribosomes upon translation stress: specifically binds collided ribosomes, promoting its activation and triggering type-I interferon production. In hematopoietic stem cells, binding to circular RNA cia-cGAS inhibits the cyclic GMP-AMP synthase activity. Strongly inhibited by compound RU.521, which is specific for mouse protein. In terms of biological role, nucleotidyltransferase that catalyzes the formation of cyclic GMP-AMP (2',3'-cGAMP) from ATP and GTP and plays a key role in innate immunity. Catalysis involves both the formation of a 2',5' phosphodiester linkage at the GpA step and the formation of a 3',5' phosphodiester linkage at the ApG step, producing c[G(2',5')pA(3',5')p]. Acts as a key DNA sensor: directly binds double-stranded DNA (dsDNA), inducing the formation of liquid-like droplets in which CGAS is activated, leading to synthesis of 2',3'-cGAMP, a second messenger that binds to and activates STING1, thereby triggering type-I interferon production. Preferentially binds long dsDNA (around 45 bp) and forms ladder-like networks that function cooperatively to stabilize individual cGAS-dsDNA complexes. Acts as a key foreign DNA sensor, the presence of double-stranded DNA (dsDNA) in the cytoplasm being a danger signal that triggers the immune responses. Has antiviral activity by sensing the presence of dsDNA from DNA viruses in the cytoplasm. Also acts as an innate immune sensor of infection by retroviruses by detecting the presence of reverse-transcribed DNA in the cytosol. Detection of retroviral reverse-transcribed DNA in the cytosol may be indirect and be mediated via interaction with PQBP1, which directly binds reverse-transcribed retroviral DNA. Also detects the presence of DNA from bacteria. 2',3'-cGAMP can be transferred from producing cells to neighboring cells through gap junctions, leading to promote STING1 activation and convey immune response to connecting cells. 2',3'-cGAMP can also be transferred between cells by virtue of packaging within viral particles contributing to IFN-induction in newly infected cells in a cGAS-independent but STING1-dependent manner. Also senses the presence of neutrophil extracellular traps (NETs) that are translocated to the cytosol following phagocytosis, leading to synthesis of 2',3'-cGAMP. In addition to foreign DNA, can also be activated by endogenous nuclear or mitochondrial DNA. When self-DNA leaks into the cytosol during cellular stress (such as mitochondrial stress, DNA damage, mitotic arrest or senescence), or is present in form of cytosolic micronuclei, CGAS is activated leading to a state of sterile inflammation. Acts as a regulator of cellular senescence by binding to cytosolic chromatin fragments that are present in senescent cells, leading to trigger type-I interferon production via STING1 and promote cellular senescence. Also involved in the inflammatory response to genome instability and double-stranded DNA breaks: acts by localizing to micronuclei arising from genome instability. Micronuclei, which as frequently found in cancer cells, consist of chromatin surrounded by its own nuclear membrane: following breakdown of the micronuclear envelope, a process associated with chromothripsis, CGAS binds self-DNA exposed to the cytosol, leading to 2',3'-cGAMP synthesis and subsequent activation of STING1 and type-I interferon production. In a healthy cell, CGAS is however kept inactive even in cellular events that directly expose it to self-DNA, such as mitosis, when cGAS associates with chromatin directly after nuclear envelope breakdown or remains in the form of postmitotic persistent nuclear cGAS pools bound to chromatin. Nuclear CGAS is inactivated by chromatin via direct interaction with nucleosomes, which block CGAS from DNA binding and thus prevent CGAS-induced autoimmunity. Also acts as a suppressor of DNA repair in response to DNA damage: inhibits homologous recombination repair by interacting with PARP1, the CGAS-PARP1 interaction leading to impede the formation of the PARP1-TIMELESS complex. In addition to DNA, also sense translation stress: in response to translation stress, translocates to the cytosol and associates with collided ribosomes, promoting its activation and triggering type-I interferon production. The protein is Cyclic GMP-AMP synthase of Mus musculus (Mouse).